Consider the following 60-residue polypeptide: Large ribosomal subunit protein bL32 (60 aa).

A compositionally biased stretch (basic residues) spans Met1–Arg16. A disordered region spans residues Met1–Ser60. The segment covering Val28–Leu44 has biased composition (basic and acidic residues).

The protein belongs to the bacterial ribosomal protein bL32 family.

In Mesorhizobium japonicum (strain LMG 29417 / CECT 9101 / MAFF 303099) (Mesorhizobium loti (strain MAFF 303099)), this protein is Large ribosomal subunit protein bL32.